Consider the following 165-residue polypeptide: Transcription antitermination protein NusB (165 aa).

The segment at 1 to 27 is disordered; that stretch reads MISDDTDQFNPRDAKSPEIAKGKSAKR. Residues 10 to 21 show a composition bias toward basic and acidic residues; that stretch reads NPRDAKSPEIAK.

It belongs to the NusB family.

In terms of biological role, involved in transcription antitermination. Required for transcription of ribosomal RNA (rRNA) genes. Binds specifically to the boxA antiterminator sequence of the ribosomal RNA (rrn) operons. The protein is Transcription antitermination protein NusB of Pseudomonas syringae pv. tomato (strain ATCC BAA-871 / DC3000).